We begin with the raw amino-acid sequence, 260 residues long: MMGFGASALESIEGEEALEVPGPPPEPRAPEPRAPEPEPGLDLSLSPSPLPESPKARKSSPGQRKGRRGGSRRGRQVRFQLAPPSPVRSEPLLVAGAPGDDHELEAPALQSSLALSLELQNARAAVASGQFDASKAVEEQLRKSFRTRCALEETVAEGLNVPRSKRLYRDLVSLQVPEEQVLNAALREKLAMLPPQPRAPPLKEVLGPGPDMTMLCNPDSLWSESPHLTVDGLPPLRLQARPRPSEDTFLMHRMLRRWEA.

Residues 1–100 (MMGFGASALE…PLLVAGAPGD (100 aa)) are disordered. Residues S46 and S53 each carry the phosphoserine modification. Over residues 64-76 (RKGRRGGSRRGRQ) the composition is skewed to basic residues.

The protein belongs to the PPP1R35 family. Interacts with PPP1CA; this interaction mediates the PPP1CA phosphatase activity inhibition. Interacts with RTTN; this interaction allows the mutual recruitment to the centriole.

The protein resides in the cytoplasm. The protein localises to the cytoskeleton. It is found in the microtubule organizing center. It localises to the centrosome. Its subcellular location is the centriole. In terms of biological role, during centriole duplication, plays a role in the centriole elongation by promoting the recruitment of the microtubule-binding elongation machinery through its interaction with TTTN, leading to the centriole to centrosome conversion. In addition may play a role in the primary cilia assembly. The polypeptide is Protein phosphatase 1 regulatory subunit 35 (Mus musculus (Mouse)).